A 694-amino-acid polypeptide reads, in one-letter code: Polyphosphate kinase (694 aa).

Position 45 (Asn-45) interacts with ATP. Mg(2+) contacts are provided by Arg-367 and Arg-397. Catalysis depends on His-427, which acts as the Phosphohistidine intermediate. Residues Tyr-460, Arg-553, and His-580 each coordinate ATP.

The protein belongs to the polyphosphate kinase 1 (PPK1) family. Mg(2+) serves as cofactor. Post-translationally, an intermediate of this reaction is the autophosphorylated ppk in which a phosphate is covalently linked to a histidine residue through a N-P bond.

The enzyme catalyses [phosphate](n) + ATP = [phosphate](n+1) + ADP. Functionally, catalyzes the reversible transfer of the terminal phosphate of ATP to form a long-chain polyphosphate (polyP). This is Polyphosphate kinase from Campylobacter jejuni subsp. doylei (strain ATCC BAA-1458 / RM4099 / 269.97).